The following is a 585-amino-acid chain: PiggyBac transposable element-derived protein 4 (585 aa).

The disordered stretch occupies residues 1-73 (MSNPRKRSIP…STSSDSGRSM (73 aa)). Over residues 25–40 (DSFDESDFSEIDDSDN) the composition is skewed to acidic residues. The span at 47–61 (EADKIRPLSHLESDG) shows a compositional bias: basic and acidic residues. A compositionally biased stretch (low complexity) spans 62 to 72 (KSSTSSDSGRS).

The sequence is that of PiggyBac transposable element-derived protein 4 (PGBD4) from Homo sapiens (Human).